The sequence spans 258 residues: Aspartate/glutamate leucyltransferase (258 aa).

The protein belongs to the R-transferase family. Bpt subfamily.

It localises to the cytoplasm. The catalysed reaction is N-terminal L-glutamyl-[protein] + L-leucyl-tRNA(Leu) = N-terminal L-leucyl-L-glutamyl-[protein] + tRNA(Leu) + H(+). The enzyme catalyses N-terminal L-aspartyl-[protein] + L-leucyl-tRNA(Leu) = N-terminal L-leucyl-L-aspartyl-[protein] + tRNA(Leu) + H(+). Functionally, functions in the N-end rule pathway of protein degradation where it conjugates Leu from its aminoacyl-tRNA to the N-termini of proteins containing an N-terminal aspartate or glutamate. This chain is Aspartate/glutamate leucyltransferase, found in Rhodopseudomonas palustris (strain BisA53).